Here is a 704-residue protein sequence, read N- to C-terminus: Capsule polysaccharide modification protein LipA (704 aa).

The protein localises to the cell inner membrane. Functionally, involved in the phospholipid modification of the capsular polysaccharide, a strong requirement for its translocation to the cell surface. In Neisseria meningitidis serogroup A / serotype 4A (strain DSM 15465 / Z2491), this protein is Capsule polysaccharide modification protein LipA (lipA).